We begin with the raw amino-acid sequence, 171 residues long: Co-chaperone protein HscB (171 aa).

The region spanning 2 to 74 is the J domain; that stretch reads DYFTLFGLPA…LMRAEYLLSL (73 aa).

It belongs to the HscB family. As to quaternary structure, interacts with HscA and stimulates its ATPase activity. Interacts with IscU.

Functionally, co-chaperone involved in the maturation of iron-sulfur cluster-containing proteins. Seems to help targeting proteins to be folded toward HscA. In Escherichia coli (strain SMS-3-5 / SECEC), this protein is Co-chaperone protein HscB.